A 1002-amino-acid chain; its full sequence is Ephrin type-B receptor 5 (1002 aa).

A signal peptide spans 1-29 (MDSNADISARRVSGMDWLWLVCFFHLVTS). Residues 30-564 (LEEILLDTTG…AQDRLPLIVG (535 aa)) lie on the Extracellular side of the membrane. The 183-residue stretch at 31–213 (EEILLDTTGE…FFYKCPAVVK (183 aa)) folds into the Eph LBD domain. 2 consecutive Fibronectin type-III domains span residues 344 to 452 (APRD…TSQS) and 453 to 548 (VPSA…TLMA). Asn-446 is a glycosylation site (N-linked (GlcNAc...) asparagine). A helical transmembrane segment spans residues 565-585 (SALGGLAFLVIAAIAILAIIF). The Cytoplasmic portion of the chain corresponds to 586–1002 (KSKRRETPYT…HLNQLEPVEV (417 aa)). In terms of domain architecture, Protein kinase spans 637-900 (IKIEEVIGSG…QIVSALDKMI (264 aa)). ATP-binding positions include 643–651 (IGSGEFGEV) and Lys-669. The Proton acceptor role is filled by Asp-762. The segment at 906 to 928 (LKATGTGSSRPSQPLLSNSPPDF) is disordered. Over residues 910–928 (GTGSSRPSQPLLSNSPPDF) the composition is skewed to polar residues. The region spanning 929 to 993 (PSLSNAHEWL…LNSIQLMKVH (65 aa)) is the SAM domain. The PDZ-binding motif lies at 1000–1002 (VEV).

The protein belongs to the protein kinase superfamily. Tyr protein kinase family. Ephrin receptor subfamily. Most abundant in thymus and detectable in brain, retina, kidney, lung and heart. Not detected in skeletal muscle and liver.

It is found in the membrane. The catalysed reaction is L-tyrosyl-[protein] + ATP = O-phospho-L-tyrosyl-[protein] + ADP + H(+). Functionally, receptor for members of the ephrin-B family. The polypeptide is Ephrin type-B receptor 5 (EPHB5) (Gallus gallus (Chicken)).